The sequence spans 974 residues: Cell division control protein 15 (974 aa).

The Protein kinase domain maps to 25–272; the sequence is YHLKQVIGRG…ADQLLKHVWI (248 aa). Residues 31-39 and K54 each bind ATP; that span reads IGRGSYGVV. The active-site Proton acceptor is D146. A self association domain region spans residues 360–702; that stretch reads CSLENIADTI…ITAICVEMSL (343 aa). The segment covering 554–563 has biased composition (low complexity); sequence SSSLPLSSSP. The segment at 554-592 is disordered; that stretch reads SSSLPLSSSPTRNSPVNSVQSPSRSPVHSLMATRPSSPM. Phosphoserine occurs at positions 561 and 567. A compositionally biased stretch (polar residues) spans 564-579; the sequence is TRNSPVNSVQSPSRSP. Residues 751 to 974 are auto-inhibitory domain; sequence TVGSSESHSV…FSVPITTFQT (224 aa). The residue at position 870 (T870) is a Phosphothreonine. Positions 941–974 are disordered; it reads AAIGSSPTKDERSNLRSSKDKSDGFSVPITTFQT. Over residues 948–963 the composition is skewed to basic and acidic residues; sequence TKDERSNLRSSKDKSD.

This sequence belongs to the protein kinase superfamily. Ser/Thr protein kinase family. As to quaternary structure, homodimer. Interacts with TEM1. In terms of processing, phosphorylation by CDK1 reduces the binding to the mother spindle pole body. The extent of phosphorylation gradually increases during cell-cycle progression until some point during late anaphase/telophase when it is rapidly dephosphorylated by CDC14. Phosphorylation inhibits kinase activity and dephosphorylation by CDC14 activates CDC15.

The protein resides in the cytoplasm. The protein localises to the cytoskeleton. It is found in the spindle pole. Its subcellular location is the bud neck. The enzyme catalyses L-seryl-[protein] + ATP = O-phospho-L-seryl-[protein] + ADP + H(+). It catalyses the reaction L-threonyl-[protein] + ATP = O-phospho-L-threonyl-[protein] + ADP + H(+). With respect to regulation, kinase activity is inhibited by phosphorylation and activated by dephosphorylation by CDC14. In terms of biological role, protein kinase of the mitotic exit network (MEN) essential for late nuclear division in the mitotic cycle. Promotes mitotic exit by phosphorylating DBF2 and directly switching on DBF2 kinase activity. Involved in the localization of DBF2 and DBF20 to the neck which is necessary to undergo cytokinesis. Plays a role in segregation of chromosomes during recovery from spindle checkpoint activation. Required for spindle pole localization of CDK1 and inactivation of CDC2 kinase activity at the end of mitosis. Required for spindle disassembly after meiosis II and plays a role in spore morphogenesis. This Saccharomyces cerevisiae (strain ATCC 204508 / S288c) (Baker's yeast) protein is Cell division control protein 15 (CDC15).